Reading from the N-terminus, the 279-residue chain is MNYQDNSLKSLKLGQKTEYASQYDRTLLQPVPRALNRDGLGITQNQPFTIGADIWTAYEISWLNEKGLPQVAIADIYLDYQSQNLIESKSFKLYLNSFNQSKFADFNAVQQTMQRDLIECAQGDVKVRLNPVAVYDAQKIEHLQGDCIDEQDIEITSYEFNADWLKDCVSDEIVEEKLVSHLLKSNCLITNQPDWGTLHIHYVGKKINQEKLLRYVVSFRQHNEFHEQCVERIFCDLMHYAKPEKLTVYARYTRRGGLDINPFRSNFENLPENLRLARQ.

Position 86–88 (86–88 (IES)) interacts with substrate. 88-89 (SK) contacts NADPH. Cysteine 187 serves as the catalytic Thioimide intermediate. Aspartate 194 (proton donor) is an active-site residue. 226–227 (HE) provides a ligand contact to substrate. 255–256 (RG) contributes to the NADPH binding site.

The protein belongs to the GTP cyclohydrolase I family. QueF type 2 subfamily. In terms of assembly, homodimer.

The protein resides in the cytoplasm. The enzyme catalyses 7-aminomethyl-7-carbaguanine + 2 NADP(+) = 7-cyano-7-deazaguanine + 2 NADPH + 3 H(+). Its pathway is tRNA modification; tRNA-queuosine biosynthesis. Functionally, catalyzes the NADPH-dependent reduction of 7-cyano-7-deazaguanine (preQ0) to 7-aminomethyl-7-deazaguanine (preQ1). The chain is NADPH-dependent 7-cyano-7-deazaguanine reductase from Haemophilus influenzae (strain PittEE).